Here is a 98-residue protein sequence, read N- to C-terminus: Large ribosomal subunit protein uL23 (98 aa).

This sequence belongs to the universal ribosomal protein uL23 family. Part of the 50S ribosomal subunit. Contacts protein L29, and trigger factor when it is bound to the ribosome.

Its function is as follows. One of the early assembly proteins it binds 23S rRNA. One of the proteins that surrounds the polypeptide exit tunnel on the outside of the ribosome. Forms the main docking site for trigger factor binding to the ribosome. This is Large ribosomal subunit protein uL23 from Bordetella petrii (strain ATCC BAA-461 / DSM 12804 / CCUG 43448).